Consider the following 414-residue polypeptide: Carboxynorspermidine synthase (414 aa).

It belongs to the saccharopine dehydrogenase family. Carboxynorspermidine synthase subfamily. As to quaternary structure, homodimer.

The catalysed reaction is carboxynorspermidine + NADP(+) + H2O = L-aspartate 4-semialdehyde + propane-1,3-diamine + NADPH + H(+). It carries out the reaction carboxyspermidine + NADP(+) + H2O = L-aspartate 4-semialdehyde + putrescine + NADPH + H(+). Its activity is regulated as follows. Activated by dithiothreitol and inhibited by SH-reactive compounds. In terms of biological role, involved in norspermidine biosynthesis. Catalyzes the synthesis of carboxynorspermidine from L-aspartate 4-semialdehyde and 1,3-diaminopropane. Is also slightly active with putrescine as a substrate. The sequence is that of Carboxynorspermidine synthase from Vibrio alginolyticus (strain ATCC 17749 / DSM 2171 / NBRC 15630 / NCIMB 1903 / NCTC 12160 / XII-53).